A 230-amino-acid chain; its full sequence is Lipoprotein-releasing system ATP-binding protein LolD (230 aa).

The 225-residue stretch at 6-230 (LQASNLEKEY…GHFILPSETL (225 aa)) folds into the ABC transporter domain. Residue 42–49 (GSSGSGKS) participates in ATP binding.

The protein belongs to the ABC transporter superfamily. Lipoprotein translocase (TC 3.A.1.125) family. The complex is composed of two ATP-binding proteins (LolD) and two transmembrane proteins (LolC and LolE).

The protein resides in the cell inner membrane. Its function is as follows. Part of the ABC transporter complex LolCDE involved in the translocation of mature outer membrane-directed lipoproteins, from the inner membrane to the periplasmic chaperone, LolA. Responsible for the formation of the LolA-lipoprotein complex in an ATP-dependent manner. The chain is Lipoprotein-releasing system ATP-binding protein LolD from Hydrogenovibrio crunogenus (strain DSM 25203 / XCL-2) (Thiomicrospira crunogena).